Reading from the N-terminus, the 185-residue chain is Protein GrpE (185 aa).

A disordered region spans residues 1-40 (MSEEKKDEILEQETVETKEEIKTEEAEQKTESLEEKVARL).

Belongs to the GrpE family. Homodimer.

Its subcellular location is the cytoplasm. In terms of biological role, participates actively in the response to hyperosmotic and heat shock by preventing the aggregation of stress-denatured proteins, in association with DnaK and GrpE. It is the nucleotide exchange factor for DnaK and may function as a thermosensor. Unfolded proteins bind initially to DnaJ; upon interaction with the DnaJ-bound protein, DnaK hydrolyzes its bound ATP, resulting in the formation of a stable complex. GrpE releases ADP from DnaK; ATP binding to DnaK triggers the release of the substrate protein, thus completing the reaction cycle. Several rounds of ATP-dependent interactions between DnaJ, DnaK and GrpE are required for fully efficient folding. The protein is Protein GrpE of Aliarcobacter butzleri (strain RM4018) (Arcobacter butzleri).